The sequence spans 111 residues: Flagellar hook-basal body complex protein FliE (111 aa).

It belongs to the FliE family.

The protein localises to the bacterial flagellum basal body. This chain is Flagellar hook-basal body complex protein FliE, found in Sinorhizobium fredii (strain NBRC 101917 / NGR234).